The following is a 424-amino-acid chain: Enolase (424 aa).

Residue glutamine 163 participates in (2R)-2-phosphoglycerate binding. Glutamate 205 acts as the Proton donor in catalysis. Aspartate 242, glutamate 285, and aspartate 312 together coordinate Mg(2+). Positions 337, 366, 367, and 388 each coordinate (2R)-2-phosphoglycerate. Lysine 337 (proton acceptor) is an active-site residue.

Belongs to the enolase family. It depends on Mg(2+) as a cofactor.

The protein resides in the cytoplasm. Its subcellular location is the secreted. It is found in the cell surface. The enzyme catalyses (2R)-2-phosphoglycerate = phosphoenolpyruvate + H2O. The protein operates within carbohydrate degradation; glycolysis; pyruvate from D-glyceraldehyde 3-phosphate: step 4/5. Catalyzes the reversible conversion of 2-phosphoglycerate (2-PG) into phosphoenolpyruvate (PEP). It is essential for the degradation of carbohydrates via glycolysis. This chain is Enolase, found in Roseobacter denitrificans (strain ATCC 33942 / OCh 114) (Erythrobacter sp. (strain OCh 114)).